Here is a 1218-residue protein sequence, read N- to C-terminus: NACHT, LRR and PYD domains-containing protein 1 allele 2 (1218 aa).

The segment at Met1–Lys61 is disordered. Over residues Lys7 to Thr29 the composition is skewed to polar residues. In terms of domain architecture, NACHT spans Gln175 to Leu484. Gly181–Ser188 is an ATP binding site. LRR repeat units lie at residues Lys343–Cys364, Asn673–Cys693, and Arg730–Cys750. A compositionally biased stretch (polar residues) spans Thr799 to Lys815. Residues Thr799 to Val842 form a disordered region. The segment at Phe835–Phe968 is ZU5. An FIIND domain is found at Phe835–Ser1118. Residues Ser969–Ser1118 are UPA. In terms of domain architecture, CARD spans Asp1122–Ser1211.

It belongs to the NLRP family. In terms of assembly, interacts (via LRR repeats) with BCL2 and BCL2L1 (via the loop between motifs BH4 and BH3). Interacts with NOD2; this interaction is enhanced in the presence of muramyl dipeptide (MDP) and increases IL1B release. Interacts with EIF2AK2/PKR; this interaction requires EIF2AK2 activity, is accompanied by EIF2AK2 autophosphorylation and promotes inflammasome assembly in response to danger-associated signals. Interacts with MEFV; this interaction targets Nlrp1a to degradation by autophagy, hence preventing excessive IL1B- and IL18-mediated inflammation. Interacts with DPP9; leading to inhibit activation of the inflammasome. DPP9 acts via formation of a ternary complex, composed of a DPP9 homodimer, one full-length NLRP1 protein, and one cleaved C-terminus of Nlrp1a (NACHT, LRR and PYD domains-containing protein 1a, C-terminus). Interacts with DPP8; leading to inhibit activation of the inflammasome, probably via formation of a ternary complex with DPP8. As to quaternary structure, interacts with the C-terminal part of Nlrp1a (NACHT, LRR and PYD domains-containing protein 1a, C-terminus) in absence of pathogens and other damage-associated signals. Interacts with the N-terminal part of Nlrp1a (NACHT, LRR and PYD domains-containing protein 1a, N-terminus) in absence of pathogens and other damage-associated signals. Homomultimer; forms the Nlrp1a inflammasome polymeric complex, a filament composed of homopolymers of this form in response to pathogens and other damage-associated signals. The Nlrp1a inflammasome polymeric complex directly recruits pro-caspase-1 (proCASP1) independently of PYCARD/ASC. Interacts (via CARD domain) with CASP1 (via CARD domain); leading to CASP1 activation. In terms of processing, autocatalytically cleaved. Autocatalytic cleavage in FIIND region occurs constitutively, prior to activation signals, and is required for inflammasome activity (IL1B release), possibly by facilitating CASP1 binding. Both N- and C-terminal parts remain associated non-covalently. Post-translationally, (Microbial infection) Cleavage by B.anthracis lethal toxin (LT) endopeptidase promotes ubiquitination and degradation of the N-terminal part, releasing the cleaved C-terminal part of the protein (NACHT, LRR and PYD domains-containing protein 1a, C-terminus), which polymerizes and forms the Nlrp1a inflammasome. Ubiquitinated in response to pathogen-associated signals, leading to its degradation by the proteasome and subsequent release of the cleaved C-terminal part of the protein (NACHT, LRR and PYD domains-containing protein 1a, C-terminus), which polymerizes and forms the Nlrp1a inflammasome.

The protein resides in the cytoplasm. The protein localises to the cytosol. It is found in the nucleus. It localises to the inflammasome. Activated by cleavage by B.anthracis lethal toxin (LT) endopeptidase. Cleavage by LT promotes ubiquitination and degradation of the N-terminal part, releasing the cleaved C-terminal part of the protein (NACHT, LRR and PYD domains-containing protein 1a, C-terminus), which polymerizes and forms the Nlrp1a inflammasome. Nlrp1a inflammasome is inhibited by DPP8 and DPP9, which sequester the C-terminal fragment of Nlrp1a (NACHT, LRR and PYD domains-containing protein 1a, C-terminus) in a ternary complex, thereby preventing Nlrp1a oligomerization and activation. Nlrp1a inflammasome is weakly activated by Val-boroPro (Talabostat, PT-100), an inhibitor of dipeptidyl peptidases DPP8 and DPP9. Val-boroPro relieves inhibition of DPP8 and/or DPP9 by promoting disruption of the ternary complex, releasing its C-terminal part from autoinhibition. Weakly activated by Toxoplasma gondii. Functionally, acts as the sensor component of the Nlrp1a inflammasome, which mediates inflammasome activation in response to various pathogen-associated signals, leading to subsequent pyroptosis. Inflammasomes are supramolecular complexes that assemble in the cytosol in response to pathogens and other damage-associated signals and play critical roles in innate immunity and inflammation. Acts as a recognition receptor (PRR): recognizes specific pathogens and other damage-associated signals, such as B.anthracis lethal toxin (LT) or Val-boroPro inhibitor, and mediates the formation of the inflammasome polymeric complex. In response to pathogen-associated signals, the N-terminal part of Nlrp1a is degraded by the proteasome, releasing the cleaved C-terminal part of the protein (NACHT, LRR and PYD domains-containing protein 1a, C-terminus), which polymerizes to initiate the formation of the inflammasome complex: the inflammasome directly recruits pro-caspase-1 (proCASP1) independently of PYCARD/ASC and promotes caspase-1 (CASP1) activation, which subsequently cleaves and activates inflammatory cytokines IL1B and IL18 and gasdermin-D (GSDMD), leading to pyroptosis. In the absence of GSDMD expression, the Nlrp1a inflammasome is able to recruit and activate CASP8, leading to activation of gasdermin-E (GSDME). Constitutes the precursor of the Nlrp1a inflammasome, which mediates autoproteolytic processing within the FIIND domain to generate the N-terminal and C-terminal parts, which are associated non-covalently in absence of pathogens and other damage-associated signals. In terms of biological role, regulatory part that prevents formation of the Nlrp1a inflammasome: in absence of pathogens and other damage-associated signals, interacts with the C-terminal part of Nlrp1a (NACHT, LRR and PYD domains-containing protein 1a, C-terminus), preventing activation of the Nlrp1a inflammasome. In response to pathogen-associated signals, this part is ubiquitinated by the N-end rule pathway and degraded by the proteasome, releasing the cleaved C-terminal part of the protein, which polymerizes and forms the Nlrp1a inflammasome. Its function is as follows. Constitutes the active part of the Nlrp1a inflammasome. In absence of pathogens and other damage-associated signals, interacts with the N-terminal part of Nlrp1a (NACHT, LRR and PYD domains-containing protein 1a, N-terminus), preventing activation of the Nlrp1a inflammasome. In response to pathogen-associated signals, the N-terminal part of Nlrp1a is degraded by the proteasome, releasing this form, which polymerizes to form the Nlrp1a inflammasome complex: the Nlrp1a inflammasome complex then directly recruits pro-caspase-1 (proCASP1) and promotes caspase-1 (CASP1) activation, leading to gasdermin-D (GSDMD) cleavage and subsequent pyroptosis. This chain is NACHT, LRR and PYD domains-containing protein 1 allele 2, found in Rattus norvegicus (Rat).